Consider the following 372-residue polypeptide: MALNDFHVSEPYTLGIELEMQVINPPGYDLSQDSSTLIDAVKPQLTAGEIKHDITESMLEMATGVCRDIDQAAAQLSAMQHVILQAASEHHLGICGGGTHPFQKWQRQEVCDNERYQRTLENFGYLIQQATVFGQHVHVGCANGDDAIYLLHGLSHFVPHFIALSAASPYMQGADTRFACARLNIFSAFPDNGPMPWVSNWQEFTGLFRRLSYTTMIDSIKDLHWDIRPSPAFGTVEVRVMDTPLTLDHAINMAGLIQATAHWLLTERPFKPQEQDYLLYKFNRFQACRYGLESVLIDVYTGDRRRLADDTLRLLDNVTLSARKLGADSAIDALRLQVKKGGNEAQYMREFIADGGSLIGLVQKHCEIWAGQ.

The protein belongs to the glutamate--cysteine ligase type 2 family. YbdK subfamily. As to quaternary structure, homodimer.

The catalysed reaction is L-cysteine + L-glutamate + ATP = gamma-L-glutamyl-L-cysteine + ADP + phosphate + H(+). In terms of biological role, ATP-dependent carboxylate-amine ligase which exhibits weak glutamate--cysteine ligase activity. In Salmonella paratyphi A (strain AKU_12601), this protein is Putative glutamate--cysteine ligase 2 (ybdK).